We begin with the raw amino-acid sequence, 150 residues long: Ribosome maturation factor RimP (150 aa).

The protein belongs to the RimP family.

The protein resides in the cytoplasm. Its function is as follows. Required for maturation of 30S ribosomal subunits. This chain is Ribosome maturation factor RimP, found in Thermotoga petrophila (strain ATCC BAA-488 / DSM 13995 / JCM 10881 / RKU-1).